The primary structure comprises 464 residues: MYLSDFLYIVPEITVLGSALALLVLGMFTSERRVRSMSLISVAIAAVLACKELIYFSGEEVSLFGGFVVRTAHTCLARAVVAVSGLFAFLLFFFAKRSYRYEFAVLMLFAFLGTLTLVEAHHFLSFYLSFELIGFASYILVCFNRSSIKASEAAIKFFVLGALSSCIMLYGISLVYGYASEFSLGVVSKVLGGEESLGATFGCALVLVGLLFKLGAVPFHMWIPDTYEGAPTVAVVFFTIVTKTAMVLVFAGLMQGVVIPITGFVWSMLLMAALSMVVGEFSAMQQKNVKRLFAYANIGHIGYVLAGMSTGVVTFKPVLFYVVTYLLINVWIFTVLLRYDDEGFEITDVAGLAAKNPFLAFTFVAALLASAGLPPFSGFFAKYTLLKAIGGVDAFGVPTLVCVVFLCLTSIIPCFYCFRIAKVVYFDVPTGEHSATSRNVGLSIMAFVAVTLSLVVVLLRERII.

14 helical membrane passes run 6–26 (FLYI…LVLG), 36–56 (SMSL…LIYF), 75–95 (CLAR…FFFA), 101–121 (YEFA…VEAH), 123–143 (FLSF…LVCF), 157–177 (FFVL…LVYG), 197–217 (LGAT…LGAV), 231–253 (PTVA…FAGL), 257–279 (VVIP…MVVG), 293–313 (FAYA…TGVV), 317–337 (PVLF…TVLL), 360–380 (AFTF…SGFF), 395–415 (FGVP…IPCF), and 439–459 (NVGL…VVLL).

It belongs to the complex I subunit 2 family. In terms of assembly, NDH-1 is composed of 14 different subunits. Subunits NuoA, H, J, K, L, M, N constitute the membrane sector of the complex.

Its subcellular location is the cell inner membrane. The enzyme catalyses a quinone + NADH + 5 H(+)(in) = a quinol + NAD(+) + 4 H(+)(out). Its function is as follows. NDH-1 shuttles electrons from NADH, via FMN and iron-sulfur (Fe-S) centers, to quinones in the respiratory chain. The immediate electron acceptor for the enzyme in this species is believed to be ubiquinone. Couples the redox reaction to proton translocation (for every two electrons transferred, four hydrogen ions are translocated across the cytoplasmic membrane), and thus conserves the redox energy in a proton gradient. The polypeptide is NADH-quinone oxidoreductase subunit N (Anaplasma phagocytophilum (strain HZ)).